A 464-amino-acid polypeptide reads, in one-letter code: ATP-dependent protease ATPase subunit HslU (464 aa).

ATP-binding positions include isoleucine 22, 64 to 69, aspartate 275, glutamate 340, and arginine 412; that span reads GVGKTE.

This sequence belongs to the ClpX chaperone family. HslU subfamily. In terms of assembly, a double ring-shaped homohexamer of HslV is capped on each side by a ring-shaped HslU homohexamer. The assembly of the HslU/HslV complex is dependent on binding of ATP.

It localises to the cytoplasm. Its function is as follows. ATPase subunit of a proteasome-like degradation complex; this subunit has chaperone activity. The binding of ATP and its subsequent hydrolysis by HslU are essential for unfolding of protein substrates subsequently hydrolyzed by HslV. HslU recognizes the N-terminal part of its protein substrates and unfolds these before they are guided to HslV for hydrolysis. The protein is ATP-dependent protease ATPase subunit HslU of Cytophaga hutchinsonii (strain ATCC 33406 / DSM 1761 / CIP 103989 / NBRC 15051 / NCIMB 9469 / D465).